The chain runs to 232 residues: uncharacterized protein (232 aa).

An Autotransporter domain is found at 1 to 232 (MIIKKSGGRW…LYTMGVSARF (232 aa)).

This is an uncharacterized protein from Escherichia coli (strain K12).